A 685-amino-acid chain; its full sequence is Serotransferrin (685 aa).

The N-terminal stretch at 1 to 16 is a signal peptide; that stretch reads MKPLLLLPLLGCLATI. 2 consecutive Transferrin-like domains span residues 23-329 and 340-666; these read VKWC…ALKI and MKWC…SLRT. The cysteines at positions 26 and 48 are disulfide-linked. Fe(3+) contacts are provided by aspartate 72 and tyrosine 102. 3 disulfides stabilise this stretch: cysteine 125/cysteine 206, cysteine 170/cysteine 184, and cysteine 234/cysteine 248. Positions 127, 131, 133, and 134 each coordinate hydrogencarbonate. Residue tyrosine 200 participates in Fe(3+) binding. Histidine 256 is a Fe(3+) binding site. 2 disulfide bridges follow: cysteine 343/cysteine 379 and cysteine 353/cysteine 370. Residues aspartate 394 and tyrosine 428 each contribute to the Fe(3+) site. Disulfide bonds link cysteine 404-cysteine 678, cysteine 419-cysteine 639, cysteine 451-cysteine 526, cysteine 475-cysteine 667, cysteine 485-cysteine 499, cysteine 496-cysteine 509, and cysteine 566-cysteine 580. Residues threonine 453, arginine 457, alanine 459, and glycine 460 each contribute to the hydrogencarbonate site. Asparagine 476 carries an N-linked (GlcNAc...) asparagine glycan. Fe(3+) is bound at residue tyrosine 520. Histidine 588 serves as a coordination point for Fe(3+).

This sequence belongs to the transferrin family. Monomer.

Its subcellular location is the secreted. Its function is as follows. Transferrins are iron binding transport proteins which can bind two Fe(3+) ions in association with the binding of an anion, usually bicarbonate. The chain is Serotransferrin (tf) from Paralichthys olivaceus (Bastard halibut).